We begin with the raw amino-acid sequence, 1070 residues long: Duffy receptor gamma form (1070 aa).

The signal sequence occupies residues 1 to 21; sequence MEGKKKRPLFFLLVLLLSHKA. Topologically, residues 22–1003 are extracellular; sequence NNVLFERMNG…SYECFTKGSS (982 aa). 2 N-linked (GlcNAc...) asparagine glycosylation sites follow: asparagine 134 and asparagine 179. Intrachain disulfides connect cysteine 214–cysteine 243 and cysteine 227–cysteine 234. Positions 279-281 match the Cell attachment site motif; it reads RGD. 4 cysteine pairs are disulfide-bonded: cysteine 296–cysteine 372, cysteine 410–cysteine 427, cysteine 422–cysteine 502, and cysteine 431–cysteine 500. Residues 518–912 form a disordered region; that stretch reads VGSGVESKAP…LNNRKLNRDQ (395 aa). Residues 526-541 show a composition bias toward polar residues; sequence APSSNPINEAVKSSSG. Composition is skewed to basic and acidic residues over residues 544 to 559, 672 to 707, and 714 to 731; these read KVQE…EGEG, GEVH…DDRS, and HTDE…KDTE. Residue asparagine 676 is glycosylated (N-linked (GlcNAc...) asparagine). A compositionally biased stretch (polar residues) spans 732-763; the sequence is TTGGSTLTPEQNVSVASDNGNVPGSGNKQNEG. N-linked (GlcNAc...) asparagine glycosylation occurs at asparagine 743. The span at 766 to 776 shows a compositional bias: low complexity; sequence ALSGAESLESS. A glycan (N-linked (GlcNAc...) asparagine) is linked at asparagine 785. Over residues 796-807 the composition is skewed to basic and acidic residues; it reads GNEKDFQKHDFM. Residues 814–863 are compositionally biased toward low complexity; the sequence is DQTSSDHTSSDQTSSDQTSSDQTSSDQTSSDQTSSDQTSSDQTSSDQTID. Over residues 864 to 888 the composition is skewed to basic and acidic residues; that stretch reads TEGHHRDNVRNPEIKSSEDMSKGDF. The segment covering 890–906 has biased composition (polar residues); it reads RNSNSNELYSHNNLNNR. Residue asparagine 936 is glycosylated (N-linked (GlcNAc...) asparagine). The chain crosses the membrane as a helical span at residues 1004 to 1025; that stretch reads TGIVYFATGGAFLIILLLFASW. Residues 1026–1070 are Cytoplasmic-facing; that stretch reads NAASNDYEEEATFDEFEEYCYNIHRTPQMPNDIEHMQQFTPLDYS.

It localises to the membrane. Functionally, binds to Neu5Gc-sialylated receptors on macaque erythrocytes. The chain is Duffy receptor gamma form from Plasmodium knowlesi.